Here is a 584-residue protein sequence, read N- to C-terminus: Protein FAM117B (584 aa).

A disordered region spans residues 1–214; sequence MSQRVRRNGS…SSSSSIIRRT (214 aa). Ser10 bears the Phosphoserine mark. Gly residues predominate over residues 53 to 79; sequence TRGGGGGGNNGGNGGASGPSGGGGSGG. Positions 80 to 90 are enriched in low complexity; that stretch reads PRTASRSTSPT. Residue Ser102 is modified to Phosphoserine. Residues 114 to 132 show a composition bias toward low complexity; sequence TSTRGTSPTRGTAPGARSS. Residues 133-142 show a composition bias toward pro residues; it reads PPRPQPPPPL. The segment covering 145–154 has biased composition (polar residues); it reads TVSSPSSSPT. A compositionally biased stretch (low complexity) spans 204–214; the sequence is SSSSSSIIRRT. Residues Ser206, Ser215, Ser216, and Ser268 each carry the phosphoserine modification. Disordered regions lie at residues 227-461 and 551-584; these read GHWP…SYMF and STNT…EAEG. The span at 287 to 297 shows a compositional bias: basic residues; it reads RSKHSSRHHRD. Ser340 bears the Phosphoserine mark. Basic and acidic residues predominate over residues 350 to 361; sequence IIIKETGEKEEQ. The span at 379 to 392 shows a compositional bias: polar residues; the sequence is QRSSSTRSIDTQTP. A Phosphoserine modification is found at Ser386. Over residues 399–412 the composition is skewed to low complexity; that stretch reads SNNSSRSQSVSPTS. Residues Ser444 and Ser452 each carry the phosphoserine modification.

This chain is Protein FAM117B (Fam117b), found in Mus musculus (Mouse).